A 118-amino-acid chain; its full sequence is UPF0102 protein Lxx14785 (118 aa).

This sequence belongs to the UPF0102 family.

In Leifsonia xyli subsp. xyli (strain CTCB07), this protein is UPF0102 protein Lxx14785.